The chain runs to 89 residues: Small ribosomal subunit protein uS15 (89 aa).

Positions 1–25 are disordered; it reads MSLDTTEKQQLINTHQTHGTDTGSA. The span at 8-25 shows a compositional bias: polar residues; sequence KQQLINTHQTHGTDTGSA.

Belongs to the universal ribosomal protein uS15 family. Part of the 30S ribosomal subunit. Forms a bridge to the 50S subunit in the 70S ribosome, contacting the 23S rRNA.

In terms of biological role, one of the primary rRNA binding proteins, it binds directly to 16S rRNA where it helps nucleate assembly of the platform of the 30S subunit by binding and bridging several RNA helices of the 16S rRNA. Its function is as follows. Forms an intersubunit bridge (bridge B4) with the 23S rRNA of the 50S subunit in the ribosome. In Synechococcus sp. (strain CC9902), this protein is Small ribosomal subunit protein uS15.